A 140-amino-acid polypeptide reads, in one-letter code: Putative pre-16S rRNA nuclease (140 aa).

Belongs to the YqgF nuclease family.

The protein resides in the cytoplasm. Functionally, could be a nuclease involved in processing of the 5'-end of pre-16S rRNA. This chain is Putative pre-16S rRNA nuclease, found in Yersinia pseudotuberculosis serotype IB (strain PB1/+).